The following is a 249-amino-acid chain: Probable septum site-determining protein MinC (249 aa).

Residues 116 to 149 are disordered; it reads AAVSPPPPPPPPPARAEPAAPVARPAPGRMQRNA. A compositionally biased stretch (pro residues) spans 119 to 130; it reads SPPPPPPPPPAR. Residues 131 to 142 are compositionally biased toward low complexity; the sequence is AEPAAPVARPAP.

It belongs to the MinC family. In terms of assembly, interacts with MinD and FtsZ.

Cell division inhibitor that blocks the formation of polar Z ring septums. Rapidly oscillates between the poles of the cell to destabilize FtsZ filaments that have formed before they mature into polar Z rings. Prevents FtsZ polymerization. This Xanthomonas campestris pv. campestris (strain ATCC 33913 / DSM 3586 / NCPPB 528 / LMG 568 / P 25) protein is Probable septum site-determining protein MinC.